The chain runs to 362 residues: Beta-ketoacyl-[acyl-carrier-protein] synthase III 2 (362 aa).

Residues Cys113 and His251 contribute to the active site. The segment at 252-256 (QANIR) is ACP-binding. Residue Asn281 is part of the active site.

Belongs to the thiolase-like superfamily. FabH family. Homodimer.

The protein localises to the cytoplasm. The catalysed reaction is malonyl-[ACP] + acetyl-CoA + H(+) = 3-oxobutanoyl-[ACP] + CO2 + CoA. The protein operates within lipid metabolism; fatty acid biosynthesis. Its function is as follows. Catalyzes the condensation reaction of fatty acid synthesis by the addition to an acyl acceptor of two carbons from malonyl-ACP. Catalyzes the first condensation reaction which initiates fatty acid synthesis and may therefore play a role in governing the total rate of fatty acid production. Possesses both acetoacetyl-ACP synthase and acetyl transacylase activities. Its substrate specificity determines the biosynthesis of branched-chain and/or straight-chain of fatty acids. The chain is Beta-ketoacyl-[acyl-carrier-protein] synthase III 2 from Vibrio vulnificus (strain YJ016).